Here is a 371-residue protein sequence, read N- to C-terminus: uncharacterized protein (371 aa).

Zn(2+) is bound at residue His76. Asp78 is a catalytic residue. Zn(2+) is bound at residue Asp106. Glu139 acts as the Proton acceptor in catalysis. Zn(2+) is bound by residues Glu140, Asp163, and His344.

The protein belongs to the peptidase M20A family. It depends on Zn(2+) as a cofactor.

Could be a peptidase. This is an uncharacterized protein from Bacillus subtilis (strain 168).